Here is a 327-residue protein sequence, read N- to C-terminus: Methionine import ATP-binding protein MetN (327 aa).

In terms of domain architecture, ABC transporter spans 3–239; the sequence is VELKNIEKIY…PKHAVTKELI (237 aa). 36–43 serves as a coordination point for ATP; sequence GYSGAGKS.

The protein belongs to the ABC transporter superfamily. Methionine importer (TC 3.A.1.24) family. In terms of assembly, the complex is composed of two ATP-binding proteins (MetN), two transmembrane proteins (MetI) and a solute-binding protein (MetQ).

It is found in the cell inner membrane. The catalysed reaction is L-methionine(out) + ATP + H2O = L-methionine(in) + ADP + phosphate + H(+). It carries out the reaction D-methionine(out) + ATP + H2O = D-methionine(in) + ADP + phosphate + H(+). Functionally, part of the ABC transporter complex MetNIQ involved in methionine import. Responsible for energy coupling to the transport system. The chain is Methionine import ATP-binding protein MetN from Helicobacter acinonychis (strain Sheeba).